A 1103-amino-acid chain; its full sequence is Bifunctional cytochrome P450/NADPH--P450 reductase (1103 aa).

Residues 1–491 (MSTPKAEPVP…SSSEHADHAA (491 aa)) are cytochrome P450. Position 415 (C415) interacts with heme. Positions 492–1103 (GHGKAGAAKK…KERYTTDIFA (612 aa)) are NADPH--P450 reductase. The Flavodoxin-like domain maps to 508–649 (MHVYYGSNTG…DFDTWGETSF (142 aa)). FMN is bound by residues 514–519 (SNTGTC), 561–564 (SYEG), C596, and T604. The 240-residue stretch at 685–924 (LQLQEGLVVE…RPSHTGFKPP (240 aa)) folds into the FAD-binding FR-type domain.

The protein in the N-terminal section; belongs to the cytochrome P450 family. Requires heme as cofactor. FAD is required as a cofactor. FMN serves as cofactor.

The enzyme catalyses 2 oxidized [cytochrome P450] + NADPH = 2 reduced [cytochrome P450] + NADP(+) + H(+). It carries out the reaction an organic molecule + reduced [NADPH--hemoprotein reductase] + O2 = an alcohol + oxidized [NADPH--hemoprotein reductase] + H2O + H(+). Its function is as follows. Functions as a fatty acid monooxygenase. Also displays a NADPH-dependent reductase activity in the C-terminal domain, which allows electron transfer from NADPH to the heme iron of the cytochrome P450 N-terminal domain. The protein is Bifunctional cytochrome P450/NADPH--P450 reductase of Aspergillus oryzae (strain ATCC 42149 / RIB 40) (Yellow koji mold).